Consider the following 405-residue polypeptide: 4-hydroxy-3-methylbut-2-en-1-yl diphosphate synthase (ferredoxin) (405 aa).

Positions 314, 317, 348, and 355 each coordinate [4Fe-4S] cluster.

The protein belongs to the IspG family. The cofactor is [4Fe-4S] cluster.

The enzyme catalyses (2E)-4-hydroxy-3-methylbut-2-enyl diphosphate + 2 oxidized [2Fe-2S]-[ferredoxin] + H2O = 2-C-methyl-D-erythritol 2,4-cyclic diphosphate + 2 reduced [2Fe-2S]-[ferredoxin] + H(+). Its pathway is isoprenoid biosynthesis; isopentenyl diphosphate biosynthesis via DXP pathway; isopentenyl diphosphate from 1-deoxy-D-xylulose 5-phosphate: step 5/6. Converts 2C-methyl-D-erythritol 2,4-cyclodiphosphate (ME-2,4cPP) into 1-hydroxy-2-methyl-2-(E)-butenyl 4-diphosphate. The protein is 4-hydroxy-3-methylbut-2-en-1-yl diphosphate synthase (ferredoxin) of Prochlorococcus marinus subsp. pastoris (strain CCMP1986 / NIES-2087 / MED4).